We begin with the raw amino-acid sequence, 231 residues long: Ion-translocating oxidoreductase complex subunit E (231 aa).

The next 6 helical transmembrane spans lie at Ala-18 to Ala-38, Leu-39 to Leu-59, Thr-63 to Val-83, Leu-86 to Val-106, Ala-125 to Leu-145, and Pro-182 to Gly-202.

This sequence belongs to the NqrDE/RnfAE family. The complex is composed of six subunits: RsxA, RsxB, RsxC, RsxD, RsxE and RsxG.

The protein localises to the cell inner membrane. Part of a membrane-bound complex that couples electron transfer with translocation of ions across the membrane. Required to maintain the reduced state of SoxR. This is Ion-translocating oxidoreductase complex subunit E from Escherichia coli O7:K1 (strain IAI39 / ExPEC).